We begin with the raw amino-acid sequence, 197 residues long: ATP-dependent Clp protease proteolytic subunit (197 aa).

Residue Ser-98 is the Nucleophile of the active site. His-123 is an active-site residue.

This sequence belongs to the peptidase S14 family. In terms of assembly, fourteen ClpP subunits assemble into 2 heptameric rings which stack back to back to give a disk-like structure with a central cavity, resembling the structure of eukaryotic proteasomes.

It is found in the cytoplasm. It carries out the reaction Hydrolysis of proteins to small peptides in the presence of ATP and magnesium. alpha-casein is the usual test substrate. In the absence of ATP, only oligopeptides shorter than five residues are hydrolyzed (such as succinyl-Leu-Tyr-|-NHMec, and Leu-Tyr-Leu-|-Tyr-Trp, in which cleavage of the -Tyr-|-Leu- and -Tyr-|-Trp bonds also occurs).. In terms of biological role, cleaves peptides in various proteins in a process that requires ATP hydrolysis. Has a chymotrypsin-like activity. Plays a major role in the degradation of misfolded proteins. The polypeptide is ATP-dependent Clp protease proteolytic subunit (Haemophilus ducreyi (strain 35000HP / ATCC 700724)).